Here is a 348-residue protein sequence, read N- to C-terminus: Aminotransferase atnJ (348 aa).

Residue arginine 79 coordinates pyridoxal 5'-phosphate. Residue lysine 180 is modified to N6-(pyridoxal phosphate)lysine. Glutamate 216 provides a ligand contact to pyridoxal 5'-phosphate.

It belongs to the class-IV pyridoxal-phosphate-dependent aminotransferase family. Pyridoxal 5'-phosphate is required as a cofactor.

Its pathway is secondary metabolite biosynthesis. In terms of biological role, aminotransferase; part of the gene cluster that mediates the biosynthesis of aspercryptins, linear lipopeptides built from six amino acids including 2 highly unusual and nonproteogenic amino acids, 2-amino-octanoic acid (2aoa) and 2-amino-dodecanol (2adol). The core structure of aspercryptins is as follows: Ser/Ala-Thr-Ile/Val-2aoa-Asn-2adol. The first step of aspercryptin biosynthesis is the generation of the fatty acid precursors, octanoic and dodecanoic acids, by the FAS subunits atnF and atnM. The fatty acid precursors are likely transformed into the corresponding alpha-amino fatty acids in three steps. First, they are hydroxylated by the cytochrome P450 monooxygenase atnE, then oxidized to the corresponding alpha-keto acids by the NAD(P)-dependent oxidoreductase atnD, and finally converted to the alpha-amino fatty acids by the PLP-dependent aminotransferases atnH or atnJ. the alpha-amino fatty acids, 2-amino-octanoic and 2-amino-dodecanoic acids, are recognized, activated, and covalently tethered to the NRPS atnA by its fourth and sixth adenylation domains. The second module of atnA is the Thr module and contains an epimerase (E) domain responsible for the epimerization of Thr to D-allo-Thr. Additionally, despite atnA having only one epimerase domain, the first amino acid of aspercryptin A1 is D-Ser, suggesting that serine is either loaded directly as D-Ser on the first module or that the epimerase domain in the threonine module epimerizes both L-Ser and L-Thr. After condensation of the hexapeptide of aspercryptin, the C-terminal reductase (TE) domain might be involved in the reductive release and production of the aldehyde hexapeptide. Further reduction would generate aspercryptins. The variety of aspercryptins produced reflects the flexibility of the atnA NRPS, allowing incorporation of alanine instead of serine, valine for isoleucine, and a C10 fatty amino alcohol instead of the C12 version. AtnB seems to be involved in the selectivity for Ile versus Val by the third module. Moreover, type B, C and D aspercryptins have an additional N-terminal cichorine, acetyl and propionyl group respectively. This is Aminotransferase atnJ from Emericella nidulans (strain FGSC A4 / ATCC 38163 / CBS 112.46 / NRRL 194 / M139) (Aspergillus nidulans).